The chain runs to 400 residues: Spaetzle-processing enzyme (400 aa).

An N-terminal signal peptide occupies residues 1 to 27 (MASTERNFLLLSLVVSALSGLVHRSDA). Positions 34–94 (SCTPQQSDER…GLVNRILVCC (61 aa)) constitute a Clip domain. 6 cysteine pairs are disulfide-bonded: cysteine 35–cysteine 93, cysteine 46–cysteine 77, cysteine 52–cysteine 94, cysteine 127–cysteine 269, cysteine 166–cysteine 182, and cysteine 211–cysteine 221. Residues 135–399 (IFGGTNTTLW…FIDWIKQKLE (265 aa)) enclose the Peptidase S1 domain. An N-linked (GlcNAc...) asparagine glycan is attached at asparagine 140. The active-site Charge relay system is histidine 181. The Ca(2+) site is built by glutamate 202, aspartate 204, threonine 207, and aspartate 210. Residue aspartate 249 is the Charge relay system of the active site. Residue asparagine 311 is glycosylated (N-linked (GlcNAc...) asparagine). Intrachain disulfides connect cysteine 315–cysteine 332 and cysteine 342–cysteine 375. The active-site Charge relay system is the serine 346.

The protein belongs to the peptidase S1 family. CLIP subfamily. In the active form, heterodimer of a light chain and a heavy chain; disulfide-linked. Post-translationally, proteolytically cleaved in response to Gram-negative bacterial or fungal infection; processing is likely to result in its activation. Cleavage produces a light chain containing the CLIP domain and a catalytic heavy chain which remain covalently associated through an interchain disulfide bond.

The protein localises to the secreted. Its function is as follows. Endopeptidase which plays a key role in innate immunity by cleaving Tl ligand spz and thereby activating the Toll pathway in response to fungal and Gram-positive bacterial infections. Acts downstream of pathogen recognition receptors PGRP-SA and GNBP1 and protease grass in response to Gram-positive bacterial infection. Acts downstream of protease psh in response to fungal infection. This chain is Spaetzle-processing enzyme, found in Drosophila melanogaster (Fruit fly).